Here is a 31-residue protein sequence, read N- to C-terminus: Nemertide alpha-5 (31 aa).

3 disulfide bridges follow: cysteine 2-cysteine 16, cysteine 9-cysteine 20, and cysteine 15-cysteine 26. 4-hydroxyproline occurs at positions 28 and 29.

The protein belongs to the nemertide family. As to expression, confined to the epidermis and to the mucus layer.

Its subcellular location is the secreted. In terms of biological role, highly potent toxin against both insect and some mammalian sodium channels (Nav). It potently inhibits inactivation of insect sodium channels of B.germanica (BgNav1) (EC(50)=7.8 nM) and also delays the inactivation of mammalian Nav with potent activity on Nav1.3/SCN3A and Nav1.4/SCN4A (hNav1.1/SCN1A; EC(50)=102.1 nM, rNav1.2/SCN2A; EC(50)=156.1 nM, rNav1.3/SCN3A; EC(50)=9.4 nM, rNav1.4/SCN4A; EC(50)=15.4 nM, hNav1.5/SCN5A; EC(50)=132.7 nM, mNav1.6/SCN8A; EC(50)=66.9 nM, hNav1.9/SCN9A; EC(50)=73 nM). 1 uM is enough to completely inhibits the inactivation, resulting in sustained non-inactivating currents. In addition, the toxin significantly enhances the recovery from inactivation, and the open state is not required for the toxin to interact with the channel. In vivo, injection into brine shrimp (Artemia salina) stops movement or causes death after 24 hours (EC(50)=0.4 uM). This chain is Nemertide alpha-5, found in Ramphogordius pseudolacteus (Ribbon worm).